We begin with the raw amino-acid sequence, 315 residues long: Olfactory receptor 2T5 (315 aa).

Residues Met1 to Ala29 are Extracellular-facing. Residues Asn3 and Asn9 are each glycosylated (N-linked (GlcNAc...) asparagine). The helical transmembrane segment at Leu30–Ile53 threads the bilayer. Over His54–Ser61 the chain is Cytoplasmic. A helical membrane pass occupies residues Pro62–Pro83. The Extracellular portion of the chain corresponds to Lys84–Gln104. A disulfide bridge connects residues Cys101 and Cys193. A helical transmembrane segment spans residues Met105–Tyr124. Topologically, residues Asp125–Arg143 are cytoplasmic. A helical membrane pass occupies residues Val144–Met162. Over Leu163–Tyr199 the chain is Extracellular. Residues Glu200–Leu223 form a helical membrane-spanning segment. The Cytoplasmic segment spans residues Leu224–Lys240. The helical transmembrane segment at Ala241–Tyr263 threads the bilayer. At Met264–Met276 the chain is on the extracellular side. Residues Met277 to Leu296 traverse the membrane as a helical segment. The Cytoplasmic portion of the chain corresponds to Arg297 to Leu315.

This sequence belongs to the G-protein coupled receptor 1 family.

Its subcellular location is the cell membrane. Functionally, odorant receptor. The protein is Olfactory receptor 2T5 (OR2T5) of Homo sapiens (Human).